A 453-amino-acid polypeptide reads, in one-letter code: Ezy-1 protein (453 aa).

The N-terminal stretch at 1-28 (MQLSNSLRSARSAAASSGCALASRPVVA) is a signal peptide. Disordered stretches follow at residues 167-187 (SDGG…DADG), 272-307 (TGKA…SSGG), and 412-453 (SAGD…SPNM). The segment covering 279–300 (AEGDDGEGEEEGEAQDVGEDAV) has biased composition (acidic residues). Positions 415-425 (DGHEPEPKRPE) are enriched in basic and acidic residues.

This Chlamydomonas reinhardtii (Chlamydomonas smithii) protein is Ezy-1 protein (Ezy-1).